A 723-amino-acid chain; its full sequence is uncharacterized protein (723 aa).

Positions 1-12 (MTGKKKNRHQKK) are enriched in basic residues. 4 disordered regions span residues 1–166 (MTGK…EKEI), 181–212 (IKRK…SGWG), 268–289 (LPLS…DNDN), and 391–455 (KNKS…NTST). Residues 30-42 (DETTTTTTTTTTT) show a composition bias toward low complexity. 2 stretches are compositionally biased toward basic and acidic residues: residues 45–129 (EETK…KTDD) and 149–166 (TDIK…EKEI). Residues 53-173 (IVENKDEDKK…KEIEDPNKKY (121 aa)) are a coiled coil. The span at 181–190 (IKRKKEKKVK) shows a compositional bias: basic residues. Residues 193 to 204 (PVQPTPPVPAPA) show a composition bias toward pro residues. A compositionally biased stretch (acidic residues) spans 272 to 288 (DTEDSDNDNDNGGDDND). Low complexity predominate over residues 397–455 (DENNNNNNNNNQQQPQQQQTTSPTLSTSPTSPKSPTTTTTNTTTTTTTNTNNNNNNTST).

This is an uncharacterized protein from Dictyostelium discoideum (Social amoeba).